We begin with the raw amino-acid sequence, 79 residues long: Envelope small membrane protein (79 aa).

The Virion surface portion of the chain corresponds to 1–16 (MYDIVGTNNSILIANV). A helical membrane pass occupies residues 17 to 37 (LVLIIICLLVVIVGCALLLIL). At 38–75 (QFVFGVCGFVFKFVCKPTILVYNKFRNESLLNEREELL) the chain is on the intravirion side.

It belongs to the betacoronaviruses E protein family. In terms of assembly, homopentamer. Interacts with membrane protein M in the budding compartment of the host cell, which is located between endoplasmic reticulum and the Golgi complex. Interacts with Nucleoprotein.

The protein localises to the host Golgi apparatus membrane. Plays a central role in virus morphogenesis and assembly. Acts as a viroporin and self-assembles in host membranes forming pentameric protein-lipid pores that allow ion transport. Also plays a role in the induction of apoptosis. This chain is Envelope small membrane protein, found in Rousettus leschenaultii (Leschenault's rousette).